The chain runs to 260 residues: Carbonic anhydrase 3 (260 aa).

A2 carries the post-translational modification N-acetylalanine. Positions 3-259 (KEWGYADHNG…IKGRIVKASF (257 aa)) constitute an Alpha-carbonic anhydrase domain. Residues S29, S43, S50, and S55 each carry the phosphoserine modification. The segment at 64–67 (KTCR) is involved in proton transfer. T73 is modified (phosphothreonine). The Zn(2+) site is built by H94, H96, and H119. Y127 is subject to Phosphotyrosine. A Phosphothreonine modification is found at T176. 2 positions are modified to S-glutathionyl cysteine: C182 and C187. 198-199 (TT) is a binding site for substrate. Position 216 is a phosphothreonine (T216). S219 is subject to Phosphoserine.

It belongs to the alpha-carbonic anhydrase family. Zn(2+) is required as a cofactor. S-thiolated both by thiol-disulfide exchange with glutathione disulfide and by oxyradical-initiated S-thiolation with reduced glutathione. Post-translationally, S-glutathionylated in hepatocytes under oxidative stress.

It is found in the cytoplasm. The catalysed reaction is hydrogencarbonate + H(+) = CO2 + H2O. Its activity is regulated as follows. Inhibited by acetazolamide. In terms of biological role, reversible hydration of carbon dioxide. The polypeptide is Carbonic anhydrase 3 (Sus scrofa (Pig)).